The following is a 280-amino-acid chain: 3-methyl-2-oxobutanoate hydroxymethyltransferase (280 aa).

Residues Asp45 and Asp84 each coordinate Mg(2+). 3-methyl-2-oxobutanoate contacts are provided by residues 45–46 (DS), Asp84, and Lys114. Glu116 lines the Mg(2+) pocket. Catalysis depends on Glu183, which acts as the Proton acceptor.

Belongs to the PanB family. Homodecamer; pentamer of dimers. It depends on Mg(2+) as a cofactor.

It is found in the cytoplasm. The enzyme catalyses 3-methyl-2-oxobutanoate + (6R)-5,10-methylene-5,6,7,8-tetrahydrofolate + H2O = 2-dehydropantoate + (6S)-5,6,7,8-tetrahydrofolate. It participates in cofactor biosynthesis; (R)-pantothenate biosynthesis; (R)-pantoate from 3-methyl-2-oxobutanoate: step 1/2. Functionally, catalyzes the reversible reaction in which hydroxymethyl group from 5,10-methylenetetrahydrofolate is transferred onto alpha-ketoisovalerate to form ketopantoate. This chain is 3-methyl-2-oxobutanoate hydroxymethyltransferase, found in Clostridium kluyveri (strain ATCC 8527 / DSM 555 / NBRC 12016 / NCIMB 10680 / K1).